A 198-amino-acid chain; its full sequence is Recombination protein RecR (198 aa).

The segment at 57–72 adopts a C4-type zinc-finger fold; sequence CSVCGHITDRDPCYIC. The Toprim domain maps to 80–175; the sequence is SVVCVVQEPK…KVTRIAHGLP (96 aa).

It belongs to the RecR family.

May play a role in DNA repair. It seems to be involved in an RecBC-independent recombinational process of DNA repair. It may act with RecF and RecO. This chain is Recombination protein RecR, found in Bacillus cytotoxicus (strain DSM 22905 / CIP 110041 / 391-98 / NVH 391-98).